We begin with the raw amino-acid sequence, 640 residues long: MDKKYYQLLKKQFSSKEAVLTEIINLSAICELPKATEHFMSDVHGEYDAFNHVLRNGSGSIKEKLRDCFPQFSSAEISSVATLIYYPQEKLDSECQLQDKKLFEHYCRLNLVYLLKTVKFVGQKYTRSKVRKAFPEKFRYILEELINEVDSTTDKQDYFDSILSQLQNLGELTRLIVALADTIRRLTVDHLHVVGDIYDRGPYPDKIIDRLINMPSVDVQWGNHDIVWMAAFSGSPLAMMNVIRICARYGNLDILEESYGINLRAILEYAERYYEPSEAFRPRLVDGVRLSADEKALLNKLQQTTAILQFKLESQLIERRPDFQLEHRDLLHFIDFSQNKIELAGETYDLIDFQAPTINPEQPASLTEEEEKIIAHLLNNFKTSDKLKRHVGFLQEKGAMYLSYNGNLLIHGCLPLHENGDFKSFTIDKKAYAGRDLLDFFDSEVRKCLAHPEESEDLATDLMWYLWVGECSSLFGKTAMTTFERYYIKDKSTHVEKKNPYYQLREQPKIITKILENFGLDENGHLVNGHTPIKEKNGENPIKADGKLIVIDGGFAKAYQKETGIAGYTLLYNSFGIQLVAHQPFSTVKAAVEKGTDIISLKRLVAEVDERKRVKDTNVGQTLLSEIADLEVLFEHYEDY.

It belongs to the FBPase class 3 family. Mn(2+) serves as cofactor.

The enzyme catalyses beta-D-fructose 1,6-bisphosphate + H2O = beta-D-fructose 6-phosphate + phosphate. Its pathway is carbohydrate biosynthesis; gluconeogenesis. The polypeptide is Fructose-1,6-bisphosphatase class 3 (Lactococcus lactis subsp. cremoris (strain MG1363)).